The following is a 166-amino-acid chain: Cyclic pyranopterin monophosphate synthase (166 aa).

Substrate-binding positions include 75 to 77 and 115 to 116; these read MCH and ME. The active site involves Asp-130.

The protein belongs to the MoaC family. As to quaternary structure, homohexamer; trimer of dimers.

It catalyses the reaction (8S)-3',8-cyclo-7,8-dihydroguanosine 5'-triphosphate = cyclic pyranopterin phosphate + diphosphate. It participates in cofactor biosynthesis; molybdopterin biosynthesis. Functionally, catalyzes the conversion of (8S)-3',8-cyclo-7,8-dihydroguanosine 5'-triphosphate to cyclic pyranopterin monophosphate (cPMP). This Shouchella clausii (strain KSM-K16) (Alkalihalobacillus clausii) protein is Cyclic pyranopterin monophosphate synthase.